A 546-amino-acid chain; its full sequence is Carboxypeptidase Y homolog A (546 aa).

The N-terminal stretch at 1–17 is a signal peptide; sequence MKLLASTVLVGAAAASI. A propeptide spanning residues 18–132 is cleaved from the precursor; sequence TPQQQVLQNP…KLEQYNLRAK (115 aa). Cystine bridges form between C186–C426, C320–C334, C344–C367, C351–C360, and C389–C396. Residue N217 is glycosylated (N-linked (GlcNAc...) asparagine). S273 is a catalytic residue. D465 is an active-site residue. N512 carries an N-linked (GlcNAc...) asparagine glycan. The active site involves H523.

Belongs to the peptidase S10 family.

It is found in the vacuole. The catalysed reaction is Release of a C-terminal amino acid with broad specificity.. Vacuolar carboxypeptidase involved in degradation of small peptides. Digests preferentially peptides containing an aliphatic or hydrophobic residue in P1' position, as well as methionine, leucine or phenylalanine in P1 position of ester substrate. In Botryotinia fuckeliana (strain B05.10) (Noble rot fungus), this protein is Carboxypeptidase Y homolog A (CPYA).